The primary structure comprises 486 residues: Bifunctional protein HldE (486 aa).

The interval 1–329 (MSSRLSGLLD…AALSVAGPVG (329 aa)) is ribokinase. Residue 204-207 (NAFE) coordinates ATP. Residue aspartate 274 is part of the active site. The tract at residues 355–486 (FTNGCFDILH…AIIARSETGK (132 aa)) is cytidylyltransferase.

It in the N-terminal section; belongs to the carbohydrate kinase PfkB family. In the C-terminal section; belongs to the cytidylyltransferase family. In terms of assembly, homodimer.

It carries out the reaction D-glycero-beta-D-manno-heptose 7-phosphate + ATP = D-glycero-beta-D-manno-heptose 1,7-bisphosphate + ADP + H(+). The catalysed reaction is D-glycero-beta-D-manno-heptose 1-phosphate + ATP + H(+) = ADP-D-glycero-beta-D-manno-heptose + diphosphate. The protein operates within nucleotide-sugar biosynthesis; ADP-L-glycero-beta-D-manno-heptose biosynthesis; ADP-L-glycero-beta-D-manno-heptose from D-glycero-beta-D-manno-heptose 7-phosphate: step 1/4. It functions in the pathway nucleotide-sugar biosynthesis; ADP-L-glycero-beta-D-manno-heptose biosynthesis; ADP-L-glycero-beta-D-manno-heptose from D-glycero-beta-D-manno-heptose 7-phosphate: step 3/4. Its function is as follows. Catalyzes the phosphorylation of D-glycero-D-manno-heptose 7-phosphate at the C-1 position to selectively form D-glycero-beta-D-manno-heptose-1,7-bisphosphate. Functionally, catalyzes the ADP transfer from ATP to D-glycero-beta-D-manno-heptose 1-phosphate, yielding ADP-D-glycero-beta-D-manno-heptose. This chain is Bifunctional protein HldE, found in Hyphomonas neptunium (strain ATCC 15444).